The following is a 287-amino-acid chain: Undecaprenyl-diphosphatase (287 aa).

A run of 6 helical transmembrane segments spans residues 50–70 (PGVS…IAYF), 99–119 (IAMA…KLFW), 128–148 (LRSV…LAVA), 206–226 (FLLG…DALA), 231–251 (AGPL…WLAI), and 263–283 (TWLF…WWSI).

It belongs to the UppP family.

It localises to the cell inner membrane. The enzyme catalyses di-trans,octa-cis-undecaprenyl diphosphate + H2O = di-trans,octa-cis-undecaprenyl phosphate + phosphate + H(+). In terms of biological role, catalyzes the dephosphorylation of undecaprenyl diphosphate (UPP). Confers resistance to bacitracin. In Parasynechococcus marenigrum (strain WH8102), this protein is Undecaprenyl-diphosphatase.